We begin with the raw amino-acid sequence, 645 residues long: Aminopeptidase P1 (645 aa).

S2 is modified (N-acetylserine). Positions 69 and 420 each coordinate a peptide. Mn(2+) contacts are provided by D440, D451, and H514. Residues H514, H523, and E549 each coordinate a peptide. 2 residues coordinate Mn(2+): E549 and E563.

The protein belongs to the peptidase M24B family. In terms of assembly, homodimer. Interacts with N-1-naphthylphthalamic acid (NPA). Mn(2+) serves as cofactor. The cofactor is Zn(2+). Post-translationally, glycosylated. Also present in a non-glycosylated form. In terms of tissue distribution, ubiquitous with preferential expression in 5 days-old seedlings, roots, flowers, inflorescences and rosette leaves (at protein levels).

Its subcellular location is the cytoplasm. It is found in the cell membrane. It localises to the microsome membrane. The catalysed reaction is Release of any N-terminal amino acid, including proline, that is linked to proline, even from a dipeptide or tripeptide.. Its activity is regulated as follows. Inhibited by EGTA and apstatin, and, to some extent, by the flavonoid kaempferol. Functionally, catalyzes the removal of a penultimate prolyl residue from the N-termini of peptides, such as Arg-Pro-Pro. Aminopeptidase that binds to the auxin transport inhibitor N-1-naphthylphthalamic acid (NPA). May play a negative role in the regulation of PIN auxin transport proteins. This chain is Aminopeptidase P1, found in Arabidopsis thaliana (Mouse-ear cress).